Reading from the N-terminus, the 228-residue chain is Triosephosphate isomerase (228 aa).

9–11 (NFK) lines the substrate pocket. H93 serves as the catalytic Electrophile. E141 serves as the catalytic Proton acceptor. Substrate contacts are provided by residues I146, G180, and 201-202 (AS).

Belongs to the triosephosphate isomerase family. As to quaternary structure, homotetramer; dimer of dimers.

It is found in the cytoplasm. The enzyme catalyses D-glyceraldehyde 3-phosphate = dihydroxyacetone phosphate. The protein operates within carbohydrate biosynthesis; gluconeogenesis. Its pathway is carbohydrate degradation; glycolysis; D-glyceraldehyde 3-phosphate from glycerone phosphate: step 1/1. Its function is as follows. Involved in the gluconeogenesis. Catalyzes stereospecifically the conversion of dihydroxyacetone phosphate (DHAP) to D-glyceraldehyde-3-phosphate (G3P). The sequence is that of Triosephosphate isomerase from Metallosphaera sedula (strain ATCC 51363 / DSM 5348 / JCM 9185 / NBRC 15509 / TH2).